Consider the following 501-residue polypeptide: Lysine--tRNA ligase (501 aa).

Positions 402 and 409 each coordinate Mg(2+).

Belongs to the class-II aminoacyl-tRNA synthetase family. As to quaternary structure, homodimer. Mg(2+) serves as cofactor.

It localises to the cytoplasm. The catalysed reaction is tRNA(Lys) + L-lysine + ATP = L-lysyl-tRNA(Lys) + AMP + diphosphate. This chain is Lysine--tRNA ligase (lysS), found in Helicobacter pylori (strain ATCC 700392 / 26695) (Campylobacter pylori).